A 377-amino-acid polypeptide reads, in one-letter code: MKATWDIFCSVVDNYGDIGVTWRLARQLVAEHGLAVRLWVDDLNAFTPMCPGADATAAQQWQHGVDVRHWPAAWLPVAPADVVIGAFACQLPAAYVEAMRARPQPPLWLNLEYLSAEDWVEGCHGLPSPQPNGLRKVFFFPGFTDKTGGLLREGSLLARRDGFQQSAEARRAFLQGLGVDLVPGALLISLFAYENPQLGNWLDALATADQPCHLLVPQGRVVAGLSQWLGEGPLHVGDVRTRGALTVQVLPFVSQDDFDRLLWSCDFNAVRGEDSFVRAQWAGQPMLWHIYVQDENAHWEKLEAFLAHYRCGLSDDADAALLGLWRAWNMDFDMGQAWRAARQHWPELQQHARLWGARQAAQPDLATALVHFYRNSL.

Tyrosine 15 is a binding site for dTDP-beta-L-rhamnose. The Proton acceptor role is filled by aspartate 17. DTDP-beta-L-rhamnose is bound by residues tyrosine 193, glutamine 255, and arginine 271–serine 275. Residue glutamate 273 is part of the active site.

It belongs to the glycosyltransferase 104 family.

The catalysed reaction is dTDP-beta-L-rhamnose + L-arginyl-[protein] = N(omega)-(alpha-L-rhamnosyl)-L-arginyl-[protein] + dTDP + H(+). Functionally, protein-arginine rhamnosyltransferase that catalyzes the transfer of a single rhamnose to elongation factor P (EF-P) on 'Lys-32', a modification required for EF-P-dependent rescue of polyproline stalled ribosomes. This is Protein-arginine rhamnosyltransferase from Pseudomonas putida (strain ATCC 47054 / DSM 6125 / CFBP 8728 / NCIMB 11950 / KT2440).